A 684-amino-acid polypeptide reads, in one-letter code: RNA helicase NPH-II (684 aa).

A Helicase ATP-binding domain is found at 184–359; it reads FRAWAARRPT…EFFPDAEFVH (176 aa). An ATP-binding site is contributed by 197-204; that stretch reads GGTGVGKT. The DEXH box signature appears at 308–311; the sequence is DEVH. The Helicase C-terminal domain occupies 392–563; it reads NVSAALSAHR…DLYVQPSDLE (172 aa).

The protein belongs to the DEAD box helicase family. DEAH subfamily. As to quaternary structure, monomer.

The protein resides in the virion. It carries out the reaction ATP + H2O = ADP + phosphate + H(+). In terms of biological role, NTP-dependent helicase that catalyzes unidirectional unwinding of 3'tailed duplex RNAs and plays an important role during transcription of early mRNAs, presumably by preventing R-loop formation behind the elongating RNA polymerase. Might also play a role in the export of newly synthesized mRNA chains out of the core into the cytoplasm. Required for replication and propagation of viral particles. The protein is RNA helicase NPH-II (NPH2) of Homo sapiens (Human).